The following is a 139-amino-acid chain: Large ribosomal subunit protein uL13 (139 aa).

The protein belongs to the universal ribosomal protein uL13 family. Part of the 50S ribosomal subunit.

In terms of biological role, this protein is one of the early assembly proteins of the 50S ribosomal subunit, although it is not seen to bind rRNA by itself. It is important during the early stages of 50S assembly. In Wolinella succinogenes (strain ATCC 29543 / DSM 1740 / CCUG 13145 / JCM 31913 / LMG 7466 / NCTC 11488 / FDC 602W) (Vibrio succinogenes), this protein is Large ribosomal subunit protein uL13.